The primary structure comprises 156 residues: Small ribosomal subunit protein uS7 (156 aa).

This sequence belongs to the universal ribosomal protein uS7 family. Part of the 30S ribosomal subunit. Contacts proteins S9 and S11.

Functionally, one of the primary rRNA binding proteins, it binds directly to 16S rRNA where it nucleates assembly of the head domain of the 30S subunit. Is located at the subunit interface close to the decoding center, probably blocks exit of the E-site tRNA. The protein is Small ribosomal subunit protein uS7 of Thiomonas delicata (Thiomonas cuprina).